Reading from the N-terminus, the 153-residue chain is Endoribonuclease YbeY (153 aa).

Zn(2+)-binding residues include His-114, His-118, and His-124.

This sequence belongs to the endoribonuclease YbeY family. Zn(2+) serves as cofactor.

It localises to the cytoplasm. Its function is as follows. Single strand-specific metallo-endoribonuclease involved in late-stage 70S ribosome quality control and in maturation of the 3' terminus of the 16S rRNA. This chain is Endoribonuclease YbeY, found in Shewanella sp. (strain MR-7).